The chain runs to 197 residues: Phosphoheptose isomerase (197 aa).

In terms of domain architecture, SIS spans 36–197 (MVNALLNEGK…IDSQLFGSEE (162 aa)). 51 to 53 (NGG) lines the substrate pocket. Zn(2+) is bound by residues histidine 60 and glutamate 64. Residues glutamate 64, 93 to 94 (ND), 119 to 121 (STS), serine 124, and glutamine 174 contribute to the substrate site. Zn(2+)-binding residues include glutamine 174 and histidine 182.

It belongs to the SIS family. GmhA subfamily. As to quaternary structure, homotetramer. The cofactor is Zn(2+).

Its subcellular location is the cytoplasm. It catalyses the reaction 2 D-sedoheptulose 7-phosphate = D-glycero-alpha-D-manno-heptose 7-phosphate + D-glycero-beta-D-manno-heptose 7-phosphate. The protein operates within carbohydrate biosynthesis; D-glycero-D-manno-heptose 7-phosphate biosynthesis; D-glycero-alpha-D-manno-heptose 7-phosphate and D-glycero-beta-D-manno-heptose 7-phosphate from sedoheptulose 7-phosphate: step 1/1. Catalyzes the isomerization of sedoheptulose 7-phosphate in D-glycero-D-manno-heptose 7-phosphate. The protein is Phosphoheptose isomerase of Pseudomonas fluorescens (strain SBW25).